The sequence spans 459 residues: VGFKAGVKDYKLTYYTPDYETKDTDILAAFRVTPQPGVPPEEAGAAVAAESSTGTWTTVWTDGLTSLDRYKGRCYHIESVAGEENQYIAYVAYPLDLFEEGSVTNMFTSIVGNVFGFKALRALRLEDLRIPPAYCKTFQGPPHGIQVERDKLNKYGRPLLGCTIKPKLGLSAKNYGRAVYECLRGGLDFTKDDENVNSQPFMRWRDRFLFCAEAIYKAQDETGEIKGHYLNATAGTCEEMIKRAVFARELGVPIIMHDYLTGGFTANTSLAHYCRDNGLLLHIHRAMHAVIDRQKNHGIHFRVLAKALRMSGGDHIHSGTVVGKLEGERDITLGFVDLLRDDYIEKDRARGIYFSQDWVSLPGVLPVASGGIHVWHMPALTEIFGDDSVLQFGGGTLGHPWGNAPGAVANRVALEACVQARNEGRDLAREGNEIIRRAGKWSPELAAACEVWKEIKFEF.

N6,N6,N6-trimethyllysine is present on K4. 2 residues coordinate substrate: N113 and T163. K165 functions as the Proton acceptor in the catalytic mechanism. Residue K167 participates in substrate binding. K191, D193, and E194 together coordinate Mg(2+). K191 carries the post-translational modification N6-carboxylysine. H284 acts as the Proton acceptor in catalysis. The substrate site is built by R285, H317, and S369.

This sequence belongs to the RuBisCO large chain family. Type I subfamily. In terms of assembly, heterohexadecamer of 8 large chains and 8 small chains; disulfide-linked. The disulfide link is formed within the large subunit homodimers. The cofactor is Mg(2+). The disulfide bond which can form in the large chain dimeric partners within the hexadecamer appears to be associated with oxidative stress and protein turnover.

The protein localises to the plastid. The protein resides in the chloroplast. It carries out the reaction 2 (2R)-3-phosphoglycerate + 2 H(+) = D-ribulose 1,5-bisphosphate + CO2 + H2O. The enzyme catalyses D-ribulose 1,5-bisphosphate + O2 = 2-phosphoglycolate + (2R)-3-phosphoglycerate + 2 H(+). In terms of biological role, ruBisCO catalyzes two reactions: the carboxylation of D-ribulose 1,5-bisphosphate, the primary event in carbon dioxide fixation, as well as the oxidative fragmentation of the pentose substrate in the photorespiration process. Both reactions occur simultaneously and in competition at the same active site. The polypeptide is Ribulose bisphosphate carboxylase large chain (Roridula gorgonias (South African fly bush)).